We begin with the raw amino-acid sequence, 432 residues long: Glutamate--tRNA ligase 2 (432 aa).

Residues 6 to 16 (PSPTGDMHIGN) carry the 'HIGH' region motif. The 'KMSKS' region motif lies at 235–239 (KMSKR). K238 lines the ATP pocket.

This sequence belongs to the class-I aminoacyl-tRNA synthetase family. Glutamate--tRNA ligase type 1 subfamily. In terms of assembly, monomer.

It is found in the cytoplasm. It carries out the reaction tRNA(Glu) + L-glutamate + ATP = L-glutamyl-tRNA(Glu) + AMP + diphosphate. Its function is as follows. Catalyzes the attachment of glutamate to tRNA(Glu) in a two-step reaction: glutamate is first activated by ATP to form Glu-AMP and then transferred to the acceptor end of tRNA(Glu). The polypeptide is Glutamate--tRNA ligase 2 (Sulfurimonas denitrificans (strain ATCC 33889 / DSM 1251) (Thiomicrospira denitrificans (strain ATCC 33889 / DSM 1251))).